Here is a 322-residue protein sequence, read N- to C-terminus: Triosephosphate isomerase, chloroplastic (322 aa).

A chloroplast-targeting transit peptide spans 1-67; sequence MAVVSTSLAS…RRCPRGVVAM (67 aa). Positions 78 and 80 each coordinate substrate. The active-site Electrophile is the His-162. The active-site Proton acceptor is the Glu-232.

Belongs to the triosephosphate isomerase family. In terms of assembly, homodimer.

It is found in the plastid. The protein localises to the chloroplast. The catalysed reaction is D-glyceraldehyde 3-phosphate = dihydroxyacetone phosphate. Its pathway is carbohydrate biosynthesis; Calvin cycle. The polypeptide is Triosephosphate isomerase, chloroplastic (TPIP1) (Spinacia oleracea (Spinach)).